The following is a 341-amino-acid chain: L-threonine 3-dehydrogenase (341 aa).

Position 38 (Cys-38) interacts with Zn(2+). Catalysis depends on charge relay system residues Thr-40 and His-43. The Zn(2+) site is built by His-63, Glu-64, Cys-93, Cys-96, Cys-99, and Cys-107. NAD(+) contacts are provided by residues Ile-175, Asp-195, Arg-200, 262-264, and 286-287; these read LGI and IY.

The protein belongs to the zinc-containing alcohol dehydrogenase family. In terms of assembly, homotetramer. The cofactor is Zn(2+).

The protein resides in the cytoplasm. It catalyses the reaction L-threonine + NAD(+) = (2S)-2-amino-3-oxobutanoate + NADH + H(+). Its pathway is amino-acid degradation; L-threonine degradation via oxydo-reductase pathway; glycine from L-threonine: step 1/2. Functionally, catalyzes the NAD(+)-dependent oxidation of L-threonine to 2-amino-3-ketobutyrate. The sequence is that of L-threonine 3-dehydrogenase from Shewanella baltica (strain OS223).